The following is a 300-amino-acid chain: Geranylgeranyl pyrophosphate synthase (300 aa).

At Met1 the chain carries N-acetylmethionine. Isopentenyl diphosphate-binding residues include Lys25, Arg28, and His57. Positions 64 and 68 each coordinate Mg(2+). Arg73 contacts dimethylallyl diphosphate. Arg74 provides a ligand contact to isopentenyl diphosphate. Dimethylallyl diphosphate-binding residues include Lys151, Thr152, Gln185, Lys202, and Lys212.

Belongs to the FPP/GGPP synthase family. As to quaternary structure, homohexamer; trimer of homodimers. Mg(2+) serves as cofactor. As to expression, abundantly expressed in testis. Found in other tissues to a lower extent. Expressed in dermal fibroblast and skeletal muscle.

It localises to the cytoplasm. It is found in the perinuclear region. Its subcellular location is the myofibril. The protein resides in the sarcomere. The protein localises to the z line. The enzyme catalyses isopentenyl diphosphate + dimethylallyl diphosphate = (2E)-geranyl diphosphate + diphosphate. It carries out the reaction isopentenyl diphosphate + (2E)-geranyl diphosphate = (2E,6E)-farnesyl diphosphate + diphosphate. It catalyses the reaction isopentenyl diphosphate + (2E,6E)-farnesyl diphosphate = (2E,6E,10E)-geranylgeranyl diphosphate + diphosphate. It participates in isoprenoid biosynthesis; farnesyl diphosphate biosynthesis; farnesyl diphosphate from geranyl diphosphate and isopentenyl diphosphate: step 1/1. The protein operates within isoprenoid biosynthesis; geranyl diphosphate biosynthesis; geranyl diphosphate from dimethylallyl diphosphate and isopentenyl diphosphate: step 1/1. It functions in the pathway isoprenoid biosynthesis; geranylgeranyl diphosphate biosynthesis; geranylgeranyl diphosphate from farnesyl diphosphate and isopentenyl diphosphate: step 1/1. Subject to product inhibition by geranylgeranyl diphosphate. Its function is as follows. Catalyzes the trans-addition of the three molecules of IPP onto DMAPP to form geranylgeranyl pyrophosphate, an important precursor of carotenoids and geranylated proteins. This chain is Geranylgeranyl pyrophosphate synthase (GGPS1), found in Homo sapiens (Human).